The sequence spans 470 residues: Uronate isomerase (470 aa).

The protein belongs to the metallo-dependent hydrolases superfamily. Uronate isomerase family.

It carries out the reaction D-glucuronate = D-fructuronate. The enzyme catalyses aldehydo-D-galacturonate = keto-D-tagaturonate. It functions in the pathway carbohydrate metabolism; pentose and glucuronate interconversion. The sequence is that of Uronate isomerase from Salmonella typhi.